Reading from the N-terminus, the 279-residue chain is Energy-coupling factor transporter ATP-binding protein EcfA1 (279 aa).

An ABC transporter domain is found at I6 to D240. Residue G40 to S47 participates in ATP binding.

This sequence belongs to the ABC transporter superfamily. Energy-coupling factor EcfA family. Forms a stable energy-coupling factor (ECF) transporter complex composed of 2 membrane-embedded substrate-binding proteins (S component), 2 ATP-binding proteins (A component) and 2 transmembrane proteins (T component).

Its subcellular location is the cell membrane. ATP-binding (A) component of a common energy-coupling factor (ECF) ABC-transporter complex. Unlike classic ABC transporters this ECF transporter provides the energy necessary to transport a number of different substrates. This chain is Energy-coupling factor transporter ATP-binding protein EcfA1, found in Levilactobacillus brevis (strain ATCC 367 / BCRC 12310 / CIP 105137 / JCM 1170 / LMG 11437 / NCIMB 947 / NCTC 947) (Lactobacillus brevis).